The following is a 428-amino-acid chain: Zinc metalloproteinase nas-27 (428 aa).

Positions 1–17 are cleaved as a signal peptide; sequence MQILPIFFPLLITSLHA. Residues 18-57 constitute a propeptide that is removed on maturation; sequence IPRGRRAVRNRNEGDINSLVGVGQYLYQGDIAVVKSRARR. A Peptidase M12A domain is found at 58–255; sequence AVIRQKHKKW…SRMNVLYNCH (198 aa). 6 cysteine pairs are disulfide-bonded: Cys-99/Cys-254, Cys-120/Cys-141, Cys-258/Cys-276, Cys-281/Cys-290, Cys-306/Cys-339, and Cys-366/Cys-386. His-150 provides a ligand contact to Zn(2+). Residue Glu-151 is part of the active site. 2 residues coordinate Zn(2+): His-154 and His-160. N-linked (GlcNAc...) asparagine glycosylation occurs at Asn-181. One can recognise an EGF-like domain in the interval 250–291; the sequence is VLYNCHERCANTLNRCQQGGYPAPSDCSQCVCPDGFGGNFCE. Residues 306–428 enclose the CUB domain; the sequence is CGGVLWASET…LDFNIEYRAV (123 aa). The N-linked (GlcNAc...) asparagine glycan is linked to Asn-377.

The cofactor is Zn(2+).

The protein resides in the secreted. Its function is as follows. Metalloprotease. In Caenorhabditis elegans, this protein is Zinc metalloproteinase nas-27 (nas-27).